The following is a 395-amino-acid chain: GPI-anchor transamidase (395 aa).

The first 27 residues, 1–27 (MAAPCFLTLRVATLAALALLSLGSSAA), serve as a signal peptide directing secretion. At 28-368 (GHIEDQAEQF…PKPRDWHPPG (341 aa)) the chain is on the lumenal side. 4 residues coordinate Ca(2+): Asp79, Ile82, Glu118, and Asp120. His164 serves as the catalytic Proton donor. Catalysis depends on Cys206, which acts as the Nucleophile; acyl-thioester intermediate. A protein is bound by residues Cys206, Ser232, and Ser234. Residues 231-236 (DSLSHQ) are autoinhibitory loop. A disulfide bond links Cys275 and Cys280. Residues 369 to 385 (GFILGLWALIIMVFFKT) form a helical membrane-spanning segment. At 386-395 (YGIKHMKFIF) the chain is on the cytoplasmic side.

This sequence belongs to the peptidase C13 family. In terms of assembly, heteropentamer. Part of the GPI-anchor transamidase complex, consisting of PIGK, PIGT, PIGS, PIGU and GAA1. Interacts with GPAA1. Interacts with PIGT; this interaction, via a disulfide link, stabilizes the expression of GAA1 and PIGK and links them to PIGS. The disulfide bond between PIGK/GPI8 and PIGT is important for normal enzyme activity.

It localises to the endoplasmic reticulum membrane. It functions in the pathway glycolipid biosynthesis; glycosylphosphatidylinositol-anchor biosynthesis. With respect to regulation, in the absence of proproteins substrates, exists in an inactive state with a disrupted catalytic site by an autoinhibitory loop. The binding of proprotein substrates, particularly the CSP region, to GPI-T triggers concerted conformational changes that alleviate the inhibition by the autoinhibitory loop. Meanwhile, proprotein residues near the omega- site induce the formation of a catalytic cleft for catalysis, following which the products are released and GPI-T reverts to the inactive state. Functionally, catalytic subunit of the glycosylphosphatidylinositol-anchor (GPI-anchor) transamidase (GPI-T) complex that catalyzes the formation of the linkage between a proprotein and a GPI-anchor and participates in GPI anchored protein biosynthesis. Recognizes diverse proproteins at a C-terminal signal peptide (CSP) region that lacks consensus sequence and replaces it with a GPI-anchor via a transamidation reaction. Transamidation catalysis reaction follows a two-phase mechanism. In the acyl-enzyme phase, the carbonyl group of the proproteins's omega-site undergoes a nucleophilic attack forming an enzyme-substrate thioester bond. Followed by a general acid catalysis that allows CSP releasing, regenerating the carbonyl, and forming the acyl-enzyme intermediate. In the GPI-anchor attachment phase, the amino group of the GPI-anchor's ethanolamine phosphate, the one on third mannose (EtNP3), mediates a nucleophilic attack on the carbonyl of the acyl-enzyme intermediate, replacing the CSP, allowing GPI-anchor attachment to the omega-residue, therefore forming the product and freeing the enzyme. This is GPI-anchor transamidase from Mus musculus (Mouse).